A 122-amino-acid polypeptide reads, in one-letter code: Large ribosomal subunit protein uL14 (122 aa).

It belongs to the universal ribosomal protein uL14 family. In terms of assembly, part of the 50S ribosomal subunit. Forms a cluster with proteins L3 and L19. In the 70S ribosome, L14 and L19 interact and together make contacts with the 16S rRNA in bridges B5 and B8.

Binds to 23S rRNA. Forms part of two intersubunit bridges in the 70S ribosome. In Corynebacterium glutamicum (strain R), this protein is Large ribosomal subunit protein uL14.